Reading from the N-terminus, the 118-residue chain is Large ribosomal subunit protein bL20 (118 aa).

This sequence belongs to the bacterial ribosomal protein bL20 family.

Binds directly to 23S ribosomal RNA and is necessary for the in vitro assembly process of the 50S ribosomal subunit. It is not involved in the protein synthesizing functions of that subunit. The protein is Large ribosomal subunit protein bL20 of Hahella chejuensis (strain KCTC 2396).